Reading from the N-terminus, the 177-residue chain is Ribosome maturation factor RimM (177 aa).

Positions 104 to 177 constitute a PRC barrel domain; that stretch reads GVDGIWADLI…IIKVKLMEGM (74 aa).

This sequence belongs to the RimM family. As to quaternary structure, binds ribosomal protein uS19.

It is found in the cytoplasm. An accessory protein needed during the final step in the assembly of 30S ribosomal subunit, possibly for assembly of the head region. Essential for efficient processing of 16S rRNA. May be needed both before and after RbfA during the maturation of 16S rRNA. It has affinity for free ribosomal 30S subunits but not for 70S ribosomes. The sequence is that of Ribosome maturation factor RimM from Magnetococcus marinus (strain ATCC BAA-1437 / JCM 17883 / MC-1).